A 404-amino-acid polypeptide reads, in one-letter code: MSVHHKKKLMPKSALLIRKYQKGIRSSFIGLIIVLSFLFFMSGSRSPEVPIAQGTSVSRVASKDYLMPFTDKSQGVIHPVDDGKKEKGVMVTLARNSDLWNLVKSIRHVEDRFNNRYHYDWVFLNDQPFSDEFKRVTSALVSGKAKYGTIPKDHWSIPSWIDTEKFDEKRLAMGKLDIPYGSSVPYRHMCRFQSGFIWRHPLLEEYEWFWRVDTDITLFCDIQYDIFKFLKVNNKKYGFILSVSEYERTIPTLWETTKKFIKKNPKFLHKNNLMKFISNDDGDTYNMCHFWTNFEIGSLDFFRSDAYREYFDYLDSSGGFFYERWGDAPVHSIAASLFLDKSEIHFFDGLGFHHPDFTSCPIEQKIRLQNKCICEPSKDVTWTPDYFCTRKYFSAGNYKLPPGI.

Residues Met-1 to Ser-27 are Cytoplasmic-facing. Residues Phe-28–Ser-44 traverse the membrane as a helical; Signal-anchor for type II membrane protein segment. Residues Arg-45–Gly-83 form a stem region region. Residues Arg-45–Ile-404 lie on the Lumenal side of the membrane. Residues Lys-84–Ile-404 form a catalytic region. Glu-295 functions as the Nucleophile in the catalytic mechanism.

The protein belongs to the glycosyltransferase 15 family. As to quaternary structure, interacts with SVP26.

The protein resides in the membrane. Its function is as follows. Possible glycosyltransferase that transfers an alpha-D-mannosyl residue from GDP-mannose into lipid-linked oligosaccharide, forming an alpha-(1-&gt;2)-D-mannosyl-D-mannose linkage. The protein is Probable mannosyltransferase KTR3 (KTR3) of Saccharomyces cerevisiae (strain ATCC 204508 / S288c) (Baker's yeast).